We begin with the raw amino-acid sequence, 138 residues long: Small ribosomal subunit protein uS11c (138 aa).

Residues 1 to 22 form a disordered region; it reads MAKAIPKISSRRNGRISSRKGA. Basic residues predominate over residues 9-22; the sequence is SSRRNGRISSRKGA.

Belongs to the universal ribosomal protein uS11 family. In terms of assembly, part of the 30S ribosomal subunit.

The protein resides in the plastid. Its subcellular location is the chloroplast. The sequence is that of Small ribosomal subunit protein uS11c from Solanum bulbocastanum (Wild potato).